Here is a 204-residue protein sequence, read N- to C-terminus: Uridylate kinase (204 aa).

26-31 is an ATP binding site; that stretch reads GAGKGT. The segment at 46 to 76 is NMP; that stretch reads SAGDLLRAEQGRAGSQYGELIKNCIKEGQIV. A ribonucleoside 5'-phosphate-binding positions include Arg-52, 74-76, 104-107, and Gln-111; these read QIV and GFPR. Positions 141 to 151 are LID; that stretch reads ERGKTSGRSDD. Arg-142 contacts ATP. A ribonucleoside 5'-phosphate-binding residues include Arg-148 and Arg-159. Position 187 (Arg-187) interacts with ATP.

The protein belongs to the adenylate kinase family. UMP-CMP kinase subfamily. In terms of assembly, monomer. Mg(2+) is required as a cofactor.

The protein resides in the cytoplasm. The protein localises to the nucleus. It catalyses the reaction UMP + ATP = UDP + ADP. Functionally, catalyzes the phosphorylation of pyrimidine nucleoside monophosphates at the expense of ATP. Plays an important role in de novo pyrimidine nucleotide biosynthesis. Has preference for UMP and dUMP as phosphate acceptors, but can also use CMP, dCMP, AMP, GMP, dGMP and dTMP. ATP and dATP are the best phosphate donors, but can also use GTP, dGTP, dCTP, and dTTP to some degree. The polypeptide is Uridylate kinase (Saccharomyces cerevisiae (strain ATCC 204508 / S288c) (Baker's yeast)).